Consider the following 577-residue polypeptide: DNA-directed RNA polymerase subunit alpha (577 aa).

An alpha N-terminal domain (alpha-NTD) region spans residues 1 to 461 (MIKIIIKETF…QLFLPLQQIR (461 aa)). Residues 510–577 (FDHRLLELDI…ALQLMKLTLK (68 aa)) are alpha C-terminal domain (alpha-CTD).

This sequence belongs to the RNA polymerase alpha chain family. As to quaternary structure, in plastids the minimal PEP RNA polymerase catalytic core is composed of four subunits: alpha, beta, beta', and beta''. When a (nuclear-encoded) sigma factor is associated with the core the holoenzyme is formed, which can initiate transcription.

It is found in the plastid. Its subcellular location is the chloroplast. It carries out the reaction RNA(n) + a ribonucleoside 5'-triphosphate = RNA(n+1) + diphosphate. In terms of biological role, DNA-dependent RNA polymerase catalyzes the transcription of DNA into RNA using the four ribonucleoside triphosphates as substrates. The protein is DNA-directed RNA polymerase subunit alpha of Tupiella akineta (Green alga).